The sequence spans 663 residues: Pyoverdine export ATP-binding/permease protein PvdT (663 aa).

Residues 11–250 form the ABC transporter domain; that stretch reads IELRDIRKRY…PSAGVERHLQ (240 aa). ATP is bound at residue 48–55; sequence GASGSGKS. 4 helical membrane passes run 292–312, 545–565, 598–618, and 626–646; these read ALTLLGIIIGVASVVVMLAVG, IAAISLLVGGIGVMNIMLMTV, VVGGLAGIALALCIGGVLLLG, and LSAIVGAFSCALVTGLVFGFM.

This sequence belongs to the ABC transporter superfamily. Macrolide exporter (TC 3.A.1.122) family. As to quaternary structure, part of the tripartite efflux system PvdRT-OpmQ, which is composed of an inner membrane component with both ATPase and permease domains, PvdT, a periplasmic membrane fusion protein, PvdR, and an outer membrane component, OpmQ.

Its subcellular location is the cell inner membrane. Functionally, part of the tripartite efflux system PvdRT-OpmQ required for the secretion into the extracellular milieu of the siderophore pyoverdine (PVD), which is involved in iron acquisition. This subunit binds PVD and drives its secretion by hydrolyzing ATP. The system is responsible for export of newly synthesized PVD after the final steps of biosynthesis have taken place in the periplasm. It is also responsible for recycling of PVD after internalization of ferri-PVD into the periplasm by the outer-membrane receptor FpvA and release of iron from PVD, thus making PVD available for new cycles of iron uptake. In addition, can expel unwanted metals complexed with PVD from the periplasm into the extracellular medium. This is Pyoverdine export ATP-binding/permease protein PvdT from Pseudomonas aeruginosa (strain ATCC 15692 / DSM 22644 / CIP 104116 / JCM 14847 / LMG 12228 / 1C / PRS 101 / PAO1).